Reading from the N-terminus, the 137-residue chain is Secreted RxLR effector protein 67 (137 aa).

The signal sequence occupies residues 1-18; sequence MRLYILVLAAIAVTLVFA. Positions 32–61 match the RxLR-dEER motif; it reads RALRQASITDEKSDDSLNAQAPPLSKSEKR. A disordered region spans residues 40–65; that stretch reads TDEKSDDSLNAQAPPLSKSEKRLSRS. Residues 114–134 traverse the membrane as a helical segment; that stretch reads WFVRMILEAGIFWAVFHCLSA.

It belongs to the RxLR effector family.

It is found in the secreted. It localises to the host cytoplasm. Its subcellular location is the host nucleus. The protein resides in the membrane. Its function is as follows. Effector that partially suppresses the tobacco programmed cell death induced by cell death-inducing proteins. The chain is Secreted RxLR effector protein 67 from Plasmopara viticola (Downy mildew of grapevine).